The following is a 902-amino-acid chain: Viral-enhancing factor (902 aa).

The 304-residue stretch at 27 to 330 (HRRTEVGVVL…IFAWLYNPQR (304 aa)) folds into the Peptidase M60 domain. N-linked (GlcNAc...) asparagine; by host glycosylation is found at asparagine 73, asparagine 265, asparagine 278, asparagine 339, asparagine 540, asparagine 593, asparagine 594, asparagine 620, asparagine 782, and asparagine 840.

In terms of biological role, involved in disruption of the peritrophic membrane and fusion of nucleocapsids with midgut cells. The chain is Viral-enhancing factor (VEF) from Heliothis (HaGV).